A 75-amino-acid chain; its full sequence is UPF0346 protein OB1736 (75 aa).

The protein belongs to the UPF0346 family.

The chain is UPF0346 protein OB1736 from Oceanobacillus iheyensis (strain DSM 14371 / CIP 107618 / JCM 11309 / KCTC 3954 / HTE831).